The primary structure comprises 365 residues: MDNSTGTWEGCHVDSRVDHLFPPSLYIFVIGVGLPTNCLALWAAYRQVRQRNELGVYLMNLSIADLLYICTLPLWVDYFLHHDNWIHGPGSCKLFGFIFYSNIYISIAFLCCISVDRYLAVAHPLRFARLRRVKTAVAVSSVVWATELGANSAPLFHDELFRDRYNHTFCFEKFPMERWVAWMNLYRVFVGFLFPWALMLLCYRGILRAVQSSVSTERQEKVKIKRLALSLIAIVLVCFAPYHALLLSRSAVYLGRPWDCGFEERVFSAYHSSLAFTSLNCVADPILYCLVNEGARSDVAKALHNLLRFLASNKPQEMANASLTLETPLTSKRSTTGKTSGAVWAVPPTAQGDQVPLKVLLPPAQ.

At 1-10 (MDNSTGTWEG) the chain is on the extracellular side. Residue Asn-3 is glycosylated (N-linked (GlcNAc...) asparagine). The helical transmembrane segment at 11 to 47 (CHVDSRVDHLFPPSLYIFVIGVGLPTNCLALWAAYRQ) threads the bilayer. Cystine bridges form between Cys-11–Cys-260 and Cys-92–Cys-170. The Cytoplasmic segment spans residues 48–51 (VRQR). A helical membrane pass occupies residues 52–82 (NELGVYLMNLSIADLLYICTLPLWVDYFLHH). The Extracellular portion of the chain corresponds to 83–87 (DNWIH). The helical transmembrane segment at 88–123 (GPGSCKLFGFIFYSNIYISIAFLCCISVDRYLAVAH) threads the bilayer. Over 124–131 (PLRFARLR) the chain is Cytoplasmic. The chain crosses the membrane as a helical span at residues 132–158 (RVKTAVAVSSVVWATELGANSAPLFHD). At 159–174 (ELFRDRYNHTFCFEKF) the chain is on the extracellular side. The extracellular loop 2 (ECL2) stretch occupies residues 159–174 (ELFRDRYNHTFCFEKF). Asn-166 carries N-linked (GlcNAc...) asparagine glycosylation. A helical transmembrane segment spans residues 175 to 212 (PMERWVAWMNLYRVFVGFLFPWALMLLCYRGILRAVQS). Topologically, residues 213-216 (SVST) are cytoplasmic. Residues 217–252 (ERQEKVKIKRLALSLIAIVLVCFAPYHALLLSRSAV) traverse the membrane as a helical segment. Over 253–262 (YLGRPWDCGF) the chain is Extracellular. Residues 263 to 291 (EERVFSAYHSSLAFTSLNCVADPILYCLV) form a helical membrane-spanning segment. The Cytoplasmic segment spans residues 292-365 (NEGARSDVAK…PLKVLLPPAQ (74 aa)).

The protein belongs to the G-protein coupled receptor 1 family.

It localises to the cell membrane. Activated by a network of residues that connects an extracellular-facing cavity to Glu-147, a conserved charged residue buried in the transmembrane core of the receptor. Protonation likely drives conformational changes in extracellular loop 2 (ECL2), which stabilizes movement of transmembrane 3 (TM3) and a series of rearrangements that connect the extracellular-facing cavity to Glu-147, a residue only conserved in proton-sensing G-protein coupled receptors. Proton-sensing G-protein coupled receptor activated by extracellular pH, which is required to monitor pH changes and generate adaptive reactions. Activated by an optimal pH of 6.8-7.2. Ligand binding causes a conformation change that triggers signaling via guanine nucleotide-binding proteins (G proteins) and modulates the activity of downstream effectors, such as adenylate cyclase. GPR4 is mainly coupled to G(s) G proteins and mediates activation of adenylate cyclase activity. May also couple with G(q) and G(12)/G(13) G proteins. Acts as a key regulator of respiratory sensitivity to CO2/H(+) in brain retrotrapezoid nucleus neurons: acts by mediating detection of protons generated by the formation of carbonic acid in the blood, an important mechanism to impulse to breathe. Also acts as a regulator of acid secretion in the kidney collecting duct by maintaining acid-base homeostasis in the kidney. Acidosis-induced GPR4 activation increases paracellular gap formation and permeability of vascular endothelial cells, possibly through the G(12)/G(13)/Rho GTPase signaling pathway. The polypeptide is G-protein coupled receptor 4 (Rattus norvegicus (Rat)).